A 257-amino-acid chain; its full sequence is Large ribosomal subunit protein uL2 (257 aa).

The segment at 207 to 226 (VEHPFGGGNHQHIGKPSTIR) is disordered.

It belongs to the universal ribosomal protein uL2 family. As to quaternary structure, component of the large ribosomal subunit.

It localises to the cytoplasm. In terms of biological role, component of the large ribosomal subunit. The ribosome is a large ribonucleoprotein complex responsible for the synthesis of proteins in the cell. This Ictalurus punctatus (Channel catfish) protein is Large ribosomal subunit protein uL2 (rpl8).